We begin with the raw amino-acid sequence, 276 residues long: Ribosomal RNA small subunit methyltransferase A (276 aa).

S-adenosyl-L-methionine-binding residues include N28, L30, G55, E77, D103, and N124.

This sequence belongs to the class I-like SAM-binding methyltransferase superfamily. rRNA adenine N(6)-methyltransferase family. RsmA subfamily.

The protein localises to the cytoplasm. The catalysed reaction is adenosine(1518)/adenosine(1519) in 16S rRNA + 4 S-adenosyl-L-methionine = N(6)-dimethyladenosine(1518)/N(6)-dimethyladenosine(1519) in 16S rRNA + 4 S-adenosyl-L-homocysteine + 4 H(+). In terms of biological role, specifically dimethylates two adjacent adenosines (A1518 and A1519) in the loop of a conserved hairpin near the 3'-end of 16S rRNA in the 30S particle. May play a critical role in biogenesis of 30S subunits. This is Ribosomal RNA small subunit methyltransferase A from Agrobacterium fabrum (strain C58 / ATCC 33970) (Agrobacterium tumefaciens (strain C58)).